We begin with the raw amino-acid sequence, 730 residues long: Elongation factor 2 (730 aa).

The region spanning 19–260 (KFIRNIGIVA…MVVKHLPDPF (242 aa)) is the tr-type G domain. Residues 28–35 (AHIDHGKT), 94–98 (DTPGH), and 148–151 (NKVD) contribute to the GTP site. Diphthamide is present on histidine 597.

The protein belongs to the TRAFAC class translation factor GTPase superfamily. Classic translation factor GTPase family. EF-G/EF-2 subfamily.

The protein resides in the cytoplasm. In terms of biological role, catalyzes the GTP-dependent ribosomal translocation step during translation elongation. During this step, the ribosome changes from the pre-translocational (PRE) to the post-translocational (POST) state as the newly formed A-site-bound peptidyl-tRNA and P-site-bound deacylated tRNA move to the P and E sites, respectively. Catalyzes the coordinated movement of the two tRNA molecules, the mRNA and conformational changes in the ribosome. This Methanosphaerula palustris (strain ATCC BAA-1556 / DSM 19958 / E1-9c) protein is Elongation factor 2.